We begin with the raw amino-acid sequence, 242 residues long: Triosephosphate isomerase (242 aa).

8 to 10 (NWK) provides a ligand contact to substrate. Residue H98 is the Electrophile of the active site. E167 functions as the Proton acceptor in the catalytic mechanism. Residues G173, S205, and 226-227 (GG) each bind substrate.

Belongs to the triosephosphate isomerase family. In terms of assembly, homodimer.

It is found in the cytoplasm. It carries out the reaction D-glyceraldehyde 3-phosphate = dihydroxyacetone phosphate. It participates in carbohydrate biosynthesis; gluconeogenesis. Its pathway is carbohydrate degradation; glycolysis; D-glyceraldehyde 3-phosphate from glycerone phosphate: step 1/1. In terms of biological role, involved in the gluconeogenesis. Catalyzes stereospecifically the conversion of dihydroxyacetone phosphate (DHAP) to D-glyceraldehyde-3-phosphate (G3P). This chain is Triosephosphate isomerase, found in Mesomycoplasma hyopneumoniae (strain 232) (Mycoplasma hyopneumoniae).